The primary structure comprises 218 residues: Eukaryotic translation initiation factor 4E-1 (218 aa).

The tract at residues 1 to 39 (MAEETDTRPASAGSRGRPAPEDDDREEGEITDLACAPSP) is disordered. Positions 21 to 30 (EDDDREEGEI) are enriched in acidic residues. 2 EIF4G-binding regions span residues 43–46 (HPLE) and 53–89 (FDNP…NNIN). MRNA is bound by residues 61–66 (KQAAWG), Lys93, and 111–112 (WE). Cys116 and Cys154 are joined by a disulfide. The tract at residues 137–146 (HTLLAMIGEQ) is EIF4G-binding. MRNA contacts are provided by residues 161-166 (RGKQER) and 206-210 (KKMDK).

The protein belongs to the eukaryotic initiation factor 4E family. As to quaternary structure, EIF4F is a multi-subunit complex, the composition of which varies with external and internal environmental conditions. It is composed of at least EIF4A, EIF4E and EIF4G. EIF4E is also known to interact with other partners. In higher plants two isoforms of EIF4F have been identified, named isoform EIF4F and isoform EIF(iso)4F. Isoform EIF4F has subunits p220 and p26, whereas isoform EIF(iso)4F has subunits p82 and p28. According to the redox status, the Cys-116-Cys-154 disulfide bridge may have a role in regulating protein function by affecting its ability to bind capped mRNA. In terms of processing, phosphorylated upon oxygen deprivation.

The protein localises to the nucleus. Its subcellular location is the cytoplasm. Functionally, component of the protein complex eIF4F, which is involved in the recognition of the mRNA cap, ATP-dependent unwinding of 5'-terminal secondary structure and recruitment of mRNA to the ribosome. Recognizes and binds the 7-methylguanosine-containing mRNA cap during an early step in the initiation of protein synthesis and facilitates ribosome binding by inducing the unwinding of the mRNAs secondary structures. In Zea mays (Maize), this protein is Eukaryotic translation initiation factor 4E-1.